Here is a 437-residue protein sequence, read N- to C-terminus: 3-phosphoshikimate 1-carboxyvinyltransferase (437 aa).

3-phosphoshikimate is bound by residues K22, S23, and R27. Position 22 (K22) interacts with phosphoenolpyruvate. Phosphoenolpyruvate-binding residues include G94 and R122. Residues S167, Q169, D314, and K341 each contribute to the 3-phosphoshikimate site. Q169 lines the phosphoenolpyruvate pocket. D314 acts as the Proton acceptor in catalysis. Phosphoenolpyruvate is bound by residues R345 and R389.

Belongs to the EPSP synthase family. Monomer.

Its subcellular location is the cytoplasm. It catalyses the reaction 3-phosphoshikimate + phosphoenolpyruvate = 5-O-(1-carboxyvinyl)-3-phosphoshikimate + phosphate. It functions in the pathway metabolic intermediate biosynthesis; chorismate biosynthesis; chorismate from D-erythrose 4-phosphate and phosphoenolpyruvate: step 6/7. Its function is as follows. Catalyzes the transfer of the enolpyruvyl moiety of phosphoenolpyruvate (PEP) to the 5-hydroxyl of shikimate-3-phosphate (S3P) to produce enolpyruvyl shikimate-3-phosphate and inorganic phosphate. This is 3-phosphoshikimate 1-carboxyvinyltransferase from Oenococcus oeni (strain ATCC BAA-331 / PSU-1).